We begin with the raw amino-acid sequence, 328 residues long: Methionyl-tRNA formyltransferase (328 aa).

(6S)-5,6,7,8-tetrahydrofolate is bound at residue 121–124 (SLLP).

The protein belongs to the Fmt family.

The catalysed reaction is L-methionyl-tRNA(fMet) + (6R)-10-formyltetrahydrofolate = N-formyl-L-methionyl-tRNA(fMet) + (6S)-5,6,7,8-tetrahydrofolate + H(+). Functionally, attaches a formyl group to the free amino group of methionyl-tRNA(fMet). The formyl group appears to play a dual role in the initiator identity of N-formylmethionyl-tRNA by promoting its recognition by IF2 and preventing the misappropriation of this tRNA by the elongation apparatus. This chain is Methionyl-tRNA formyltransferase, found in Paraburkholderia xenovorans (strain LB400).